The following is a 129-amino-acid chain: Class I hydrophobin 11 (129 aa).

The signal sequence occupies residues 1–19 (MRLTPLLAALALPLLTVLA). 4 cysteine pairs are disulfide-bonded: Cys-48-Cys-106, Cys-55-Cys-100, Cys-56-Cys-89, and Cys-107-Cys-122.

The protein belongs to the fungal hydrophobin family. In terms of assembly, self-assembles to form functional amyloid fibrils called rodlets. Self-assembly into fibrillar rodlets occurs spontaneously at hydrophobic:hydrophilic interfaces and the rodlets further associate laterally to form amphipathic monolayers.

The protein localises to the secreted. The protein resides in the cell wall. In terms of biological role, aerial growth, conidiation, and dispersal of filamentous fungi in the environment rely upon a capability of their secreting small amphipathic proteins called hydrophobins (HPBs) with low sequence identity. Class I can self-assemble into an outermost layer of rodlet bundles on aerial cell surfaces, conferring cellular hydrophobicity that supports fungal growth, development and dispersal; whereas Class II form highly ordered films at water-air interfaces through intermolecular interactions but contribute nothing to the rodlet structure. The protein is Class I hydrophobin 11 of Pleurotus ostreatus (strain PC15) (Oyster mushroom).